A 142-amino-acid chain; its full sequence is Hemoglobin subunit alpha-A (142 aa).

The 141-residue stretch at 2 to 142 (VLSPTDKSIV…VSTVLTSKYR (141 aa)) folds into the Globin domain. H59 provides a ligand contact to O2. H88 contributes to the heme b binding site.

It belongs to the globin family. As to quaternary structure, heterotetramer of two alpha chains and two beta chains. As to expression, red blood cells.

Involved in oxygen transport from the lung to the various peripheral tissues. The sequence is that of Hemoglobin subunit alpha-A (HBAA) from Otolemur crassicaudatus (Brown greater galago).